Reading from the N-terminus, the 99-residue chain is Aspartyl/glutamyl-tRNA(Asn/Gln) amidotransferase subunit C (99 aa).

Belongs to the GatC family. In terms of assembly, heterotrimer of A, B and C subunits.

It catalyses the reaction L-glutamyl-tRNA(Gln) + L-glutamine + ATP + H2O = L-glutaminyl-tRNA(Gln) + L-glutamate + ADP + phosphate + H(+). The enzyme catalyses L-aspartyl-tRNA(Asn) + L-glutamine + ATP + H2O = L-asparaginyl-tRNA(Asn) + L-glutamate + ADP + phosphate + 2 H(+). In terms of biological role, allows the formation of correctly charged Asn-tRNA(Asn) or Gln-tRNA(Gln) through the transamidation of misacylated Asp-tRNA(Asn) or Glu-tRNA(Gln) in organisms which lack either or both of asparaginyl-tRNA or glutaminyl-tRNA synthetases. The reaction takes place in the presence of glutamine and ATP through an activated phospho-Asp-tRNA(Asn) or phospho-Glu-tRNA(Gln). This Paracidovorax citrulli (strain AAC00-1) (Acidovorax citrulli) protein is Aspartyl/glutamyl-tRNA(Asn/Gln) amidotransferase subunit C.